The primary structure comprises 150 residues: D-aminoacyl-tRNA deacylase (150 aa).

Positions 136-137 match the Gly-cisPro motif, important for rejection of L-amino acids motif; the sequence is GP.

Belongs to the DTD family. In terms of assembly, homodimer.

The protein localises to the cytoplasm. It catalyses the reaction glycyl-tRNA(Ala) + H2O = tRNA(Ala) + glycine + H(+). It carries out the reaction a D-aminoacyl-tRNA + H2O = a tRNA + a D-alpha-amino acid + H(+). In terms of biological role, an aminoacyl-tRNA editing enzyme that deacylates mischarged D-aminoacyl-tRNAs. Also deacylates mischarged glycyl-tRNA(Ala), protecting cells against glycine mischarging by AlaRS. Acts via tRNA-based rather than protein-based catalysis; rejects L-amino acids rather than detecting D-amino acids in the active site. By recycling D-aminoacyl-tRNA to D-amino acids and free tRNA molecules, this enzyme counteracts the toxicity associated with the formation of D-aminoacyl-tRNA entities in vivo and helps enforce protein L-homochirality. The sequence is that of D-aminoacyl-tRNA deacylase from Macrococcus caseolyticus (strain JCSC5402) (Macrococcoides caseolyticum).